A 98-amino-acid chain; its full sequence is NADH-ubiquinone oxidoreductase chain 4L (98 aa).

The next 3 helical transmembrane spans lie at 1–21, 29–49, and 61–81; these read MSMV…GLLM, SLLC…VAIL, and IILL…LVMV.

This sequence belongs to the complex I subunit 4L family. Core subunit of respiratory chain NADH dehydrogenase (Complex I) which is composed of 45 different subunits.

It localises to the mitochondrion inner membrane. The catalysed reaction is a ubiquinone + NADH + 5 H(+)(in) = a ubiquinol + NAD(+) + 4 H(+)(out). Functionally, core subunit of the mitochondrial membrane respiratory chain NADH dehydrogenase (Complex I) which catalyzes electron transfer from NADH through the respiratory chain, using ubiquinone as an electron acceptor. Part of the enzyme membrane arm which is embedded in the lipid bilayer and involved in proton translocation. This chain is NADH-ubiquinone oxidoreductase chain 4L (MT-ND4L), found in Felis catus (Cat).